The primary structure comprises 427 residues: Glutamate-1-semialdehyde 2,1-aminomutase (427 aa).

Position 265 is an N6-(pyridoxal phosphate)lysine (K265).

The protein belongs to the class-III pyridoxal-phosphate-dependent aminotransferase family. HemL subfamily. As to quaternary structure, homodimer. Pyridoxal 5'-phosphate serves as cofactor.

The protein localises to the cytoplasm. The enzyme catalyses (S)-4-amino-5-oxopentanoate = 5-aminolevulinate. It functions in the pathway porphyrin-containing compound metabolism; protoporphyrin-IX biosynthesis; 5-aminolevulinate from L-glutamyl-tRNA(Glu): step 2/2. The sequence is that of Glutamate-1-semialdehyde 2,1-aminomutase from Paraburkholderia phytofirmans (strain DSM 17436 / LMG 22146 / PsJN) (Burkholderia phytofirmans).